The primary structure comprises 351 residues: AA9 family lytic polysaccharide monooxygenase A (351 aa).

His1 is a Cu(2+) binding site. Cys52 and Cys178 are disulfide-bonded. A glycan (N-linked (GlcNAc...) asparagine) is linked at Asn53. Cu(2+) is bound at residue His86. N-linked (GlcNAc...) asparagine glycosylation is present at Asn138. His164 and Gln173 together coordinate O2. Residue Tyr175 coordinates Cu(2+). A lipid anchor (GPI-anchor amidated serine) is attached at Ser280. A propeptide spans 281–351 (SAIGTSTASS…RSGTLGRLSF (71 aa)) (removed in mature form).

It belongs to the polysaccharide monooxygenase AA9 family. Requires Cu(2+) as cofactor.

The protein localises to the cell membrane. It carries out the reaction [(1-&gt;4)-beta-D-glucosyl]n+m + reduced acceptor + O2 = 4-dehydro-beta-D-glucosyl-[(1-&gt;4)-beta-D-glucosyl]n-1 + [(1-&gt;4)-beta-D-glucosyl]m + acceptor + H2O.. Lytic polysaccharide monooxygenase (LPMO) that depolymerizes crystalline and amorphous polysaccharides via the oxidation of scissile alpha- or beta-(1-4)-glycosidic bonds, yielding C1 or C4 oxidation products. Catalysis by LPMOs requires the reduction of the active-site copper from Cu(II) to Cu(I) by a reducing agent and H(2)O(2) or O(2) as a cosubstrate. Functionally, has broad specificity, cleaving at any position along the beta-glucan backbone of xyloglucan, regardless of substitutions. Shows minor activity on glucomannan. This is AA9 family lytic polysaccharide monooxygenase A from Gloeophyllum trabeum (Brown rot fungus).